The primary structure comprises 322 residues: ATP-dependent 6-phosphofructokinase (322 aa).

Gly-11 is an ATP binding site. Arg-21–Arg-25 provides a ligand contact to ADP. ATP contacts are provided by residues Arg-72–Cys-73 and Gly-102–Ser-105. Asp-103 serves as a coordination point for Mg(2+). Position 127 to 129 (Thr-127 to Asp-129) interacts with substrate. Catalysis depends on Asp-129, which acts as the Proton acceptor. Arg-156 contacts ADP. Residues Arg-164 and Met-171 to Arg-173 each bind substrate. ADP contacts are provided by residues Gly-187–Glu-189, Arg-213, and Lys-215–His-217. Substrate contacts are provided by residues Glu-224, Arg-245, and His-251–Arg-254.

This sequence belongs to the phosphofructokinase type A (PFKA) family. ATP-dependent PFK group I subfamily. Prokaryotic clade 'B1' sub-subfamily. Homotetramer. The cofactor is Mg(2+).

The protein resides in the cytoplasm. The catalysed reaction is beta-D-fructose 6-phosphate + ATP = beta-D-fructose 1,6-bisphosphate + ADP + H(+). The protein operates within carbohydrate degradation; glycolysis; D-glyceraldehyde 3-phosphate and glycerone phosphate from D-glucose: step 3/4. Allosterically activated by ADP and other diphosphonucleosides, and allosterically inhibited by phosphoenolpyruvate. In terms of biological role, catalyzes the phosphorylation of D-fructose 6-phosphate to fructose 1,6-bisphosphate by ATP, the first committing step of glycolysis. This chain is ATP-dependent 6-phosphofructokinase, found in Staphylococcus aureus (strain JH1).